Reading from the N-terminus, the 346-residue chain is S-adenosylmethionine:tRNA ribosyltransferase-isomerase (346 aa).

The protein belongs to the QueA family. Monomer.

It is found in the cytoplasm. The catalysed reaction is 7-aminomethyl-7-carbaguanosine(34) in tRNA + S-adenosyl-L-methionine = epoxyqueuosine(34) in tRNA + adenine + L-methionine + 2 H(+). It participates in tRNA modification; tRNA-queuosine biosynthesis. Transfers and isomerizes the ribose moiety from AdoMet to the 7-aminomethyl group of 7-deazaguanine (preQ1-tRNA) to give epoxyqueuosine (oQ-tRNA). This Nitrosomonas eutropha (strain DSM 101675 / C91 / Nm57) protein is S-adenosylmethionine:tRNA ribosyltransferase-isomerase.